The chain runs to 288 residues: Proteasome assembly chaperone 1 (288 aa).

A disordered region spans residues 1-37; that stretch reads MAATFFGEVVKAPCRAGTEDEEEEDEGRRETPEDREV. A2 bears the N-acetylalanine mark. T18 bears the Phosphothreonine mark. Residues 26–37 show a composition bias toward basic and acidic residues; sequence EGRRETPEDREV. At T54 the chain carries Phosphothreonine. At S180 the chain carries Phosphoserine. The residue at position 264 (K264) is an N6-acetyllysine.

This sequence belongs to the PSMG1 family. In terms of assembly, forms a heterodimer with PSMG2. The PSMG1-PSMG2 heterodimer interacts directly with the PSMA5 and PSMA7 proteasome alpha subunits. Degraded by the proteasome upon completion of 20S proteasome maturation.

It localises to the cytoplasm. The protein resides in the endoplasmic reticulum. Its function is as follows. Chaperone protein which promotes assembly of the 20S proteasome as part of a heterodimer with PSMG2. The PSMG1-PSMG2 heterodimer binds to the PSMA5 and PSMA7 proteasome subunits, promotes assembly of the proteasome alpha subunits into the heteroheptameric alpha ring and prevents alpha ring dimerization. This chain is Proteasome assembly chaperone 1 (PSMG1), found in Callithrix jacchus (White-tufted-ear marmoset).